Here is a 400-residue protein sequence, read N- to C-terminus: Enoyl-[acyl-carrier-protein] reductase [NADH] (400 aa).

Residues Gly48–Tyr53, Phe74–Glu75, Asp111–Ala112, and Leu139–Ala140 each bind NAD(+). A substrate-binding site is contributed by Tyr225. Tyr235 (proton donor) is an active-site residue. Residues Lys244 and Val273–Thr275 contribute to the NAD(+) site.

This sequence belongs to the TER reductase family. As to quaternary structure, monomer.

The enzyme catalyses a 2,3-saturated acyl-[ACP] + NAD(+) = a (2E)-enoyl-[ACP] + NADH + H(+). Its pathway is lipid metabolism; fatty acid biosynthesis. Involved in the final reduction of the elongation cycle of fatty acid synthesis (FAS II). Catalyzes the reduction of a carbon-carbon double bond in an enoyl moiety that is covalently linked to an acyl carrier protein (ACP). This is Enoyl-[acyl-carrier-protein] reductase [NADH] from Shewanella frigidimarina (strain NCIMB 400).